The chain runs to 485 residues: Glutamyl-tRNA(Gln) amidotransferase subunit A (485 aa).

Active-site charge relay system residues include lysine 79 and serine 154. Serine 178 (acyl-ester intermediate) is an active-site residue.

The protein belongs to the amidase family. GatA subfamily. As to quaternary structure, heterotrimer of A, B and C subunits.

It catalyses the reaction L-glutamyl-tRNA(Gln) + L-glutamine + ATP + H2O = L-glutaminyl-tRNA(Gln) + L-glutamate + ADP + phosphate + H(+). Functionally, allows the formation of correctly charged Gln-tRNA(Gln) through the transamidation of misacylated Glu-tRNA(Gln) in organisms which lack glutaminyl-tRNA synthetase. The reaction takes place in the presence of glutamine and ATP through an activated gamma-phospho-Glu-tRNA(Gln). The sequence is that of Glutamyl-tRNA(Gln) amidotransferase subunit A from Persephonella marina (strain DSM 14350 / EX-H1).